Reading from the N-terminus, the 804-residue chain is Probable protein phosphatase 2C 18 (804 aa).

Residues 19-39 (DASGPVLFWCVLIIFAVPDAI) traverse the membrane as a helical segment. In terms of domain architecture, PPM-type phosphatase spans 129–434 (KYIVSSMQGL…ENTTVILVQF (306 aa)). Asp-165, Gly-166, Gln-384, and Glu-425 together coordinate Mn(2+). Disordered stretches follow at residues 460-509 (STSA…GGSA), 564-599 (DEVE…LNAS), 623-653 (PLQG…DDDV), and 675-804 (VDST…EGSP). Residues 468 to 499 (GSDSDTSATSDEGVDDTATAGTTTTGYEAGSS) show a composition bias toward low complexity. The span at 628–637 (DVSSTSTNPN) shows a compositional bias: polar residues. Residues 638–647 (TATDTGSGSR) show a composition bias toward low complexity. Residues 713–734 (LVNNDTTVADNNASGVADSTTV) show a composition bias toward polar residues. Over residues 776–789 (DATATATASASAAV) the composition is skewed to low complexity. Acidic residues predominate over residues 790–804 (ADDEGTAPDDSEGSP).

The protein belongs to the PP2C family. Mg(2+) serves as cofactor. Mn(2+) is required as a cofactor.

The protein localises to the membrane. The enzyme catalyses O-phospho-L-seryl-[protein] + H2O = L-seryl-[protein] + phosphate. It catalyses the reaction O-phospho-L-threonyl-[protein] + H2O = L-threonyl-[protein] + phosphate. The chain is Probable protein phosphatase 2C 18 from Oryza sativa subsp. japonica (Rice).